A 153-amino-acid polypeptide reads, in one-letter code: MKVFEGKFNGKGTKIAIVAARFNEFITSKLIGGAEDILKRHEVQDDDINLFWVPGAFEIPLIAKKLAQSKKYDAVITLGAVIKGSTPHFDYVCAEVSKGVAHVSLESEVPVIFGVLTTNSIEEAIERAGTKAGNKGADAAMTAIEMINLIKGI.

5-amino-6-(D-ribitylamino)uracil-binding positions include phenylalanine 22, 56–58, and 80–82; these read AFE and AVI. 85–86 contacts (2S)-2-hydroxy-3-oxobutyl phosphate; that stretch reads ST. Histidine 88 (proton donor) is an active-site residue. Phenylalanine 113 is a 5-amino-6-(D-ribitylamino)uracil binding site. Arginine 127 is a (2S)-2-hydroxy-3-oxobutyl phosphate binding site.

Belongs to the DMRL synthase family.

It catalyses the reaction (2S)-2-hydroxy-3-oxobutyl phosphate + 5-amino-6-(D-ribitylamino)uracil = 6,7-dimethyl-8-(1-D-ribityl)lumazine + phosphate + 2 H2O + H(+). It participates in cofactor biosynthesis; riboflavin biosynthesis; riboflavin from 2-hydroxy-3-oxobutyl phosphate and 5-amino-6-(D-ribitylamino)uracil: step 1/2. Its function is as follows. Catalyzes the formation of 6,7-dimethyl-8-ribityllumazine by condensation of 5-amino-6-(D-ribitylamino)uracil with 3,4-dihydroxy-2-butanone 4-phosphate. This is the penultimate step in the biosynthesis of riboflavin. The polypeptide is 6,7-dimethyl-8-ribityllumazine synthase (Fusobacterium nucleatum subsp. nucleatum (strain ATCC 25586 / DSM 15643 / BCRC 10681 / CIP 101130 / JCM 8532 / KCTC 2640 / LMG 13131 / VPI 4355)).